A 258-amino-acid chain; its full sequence is Imidazole glycerol phosphate synthase subunit HisF (258 aa).

Residues aspartate 11 and aspartate 130 contribute to the active site.

The protein belongs to the HisA/HisF family. In terms of assembly, heterodimer of HisH and HisF.

Its subcellular location is the cytoplasm. The catalysed reaction is 5-[(5-phospho-1-deoxy-D-ribulos-1-ylimino)methylamino]-1-(5-phospho-beta-D-ribosyl)imidazole-4-carboxamide + L-glutamine = D-erythro-1-(imidazol-4-yl)glycerol 3-phosphate + 5-amino-1-(5-phospho-beta-D-ribosyl)imidazole-4-carboxamide + L-glutamate + H(+). It participates in amino-acid biosynthesis; L-histidine biosynthesis; L-histidine from 5-phospho-alpha-D-ribose 1-diphosphate: step 5/9. IGPS catalyzes the conversion of PRFAR and glutamine to IGP, AICAR and glutamate. The HisF subunit catalyzes the cyclization activity that produces IGP and AICAR from PRFAR using the ammonia provided by the HisH subunit. The protein is Imidazole glycerol phosphate synthase subunit HisF of Cronobacter sakazakii (strain ATCC BAA-894) (Enterobacter sakazakii).